Here is a 154-residue protein sequence, read N- to C-terminus: Yop proteins translocation protein O (154 aa).

Positions 132-154 are disordered; it reads ELNQQHYQEEQEQEEFLQHHRNA.

This sequence belongs to the SpaM family.

Component of the yop secretion machinery. This chain is Yop proteins translocation protein O (yscO), found in Yersinia pseudotuberculosis serotype I (strain IP32953).